The following is a 707-amino-acid chain: MESGTVLLESKSSPLNLLHEMHELRLLGHLCDVTVIVDYQGVREDFMAHKAVLAATSKFFKEVFLNEKRADGTRTNVYLSEVQVVDFASFLEFVYTARVRVKEDRVQQMLEVAEKLKCLDLSETCLQLKKQMLESVLLELQNFSESQEVEASSGPQVSVTPSSKASVPAGEDAHSNGLVDSSDYPIERLGNGLSPETPSKKCKEKLDKKKDVAKPPFPKIRRASGRLAGKKVFVEIPKKKYTRRLREQQKSAEEAAKNDKCPQDQSPDNERVEAEPASKSEACPASVEREESLQKVEGEKEEEEGKDGEEKKKSNFQCTVCDKAFLYEKSFLKHIKYHHGVATEVVYRCDTCGQTFANRCNLKSHQRHVHSSERHFPCEMCAKKFKRKKDVKRHVLQVHEGGGERHRCGQCGKGLSSKTALRLHERTHTGDKPYGCTKCDAKFSQPSALKTHLRVHTGERPFVCDECGARFTQNHMLIYHKRCHTGERPFMCETCGKSFASKEYLKHHNRIHTGSKPFKCEVCLRTFAQRNSLYQHIKVHTGERPYCCDQCGKQFTQVNALQRHHRIHTGEKPYMCNACGRTFTDKSTLRRHTSIHDKNTPWKSFLVIVDGSPKNDEGQKTEQPDEEYASPKLSDRLLSFGENSHFNNLLEVQGNVPAVQENSSTDTACKAVVSQDALLTTSISALGELTPQTVSMPAHLPSLTNME.

The BTB domain occupies 31 to 103 (CDVTVIVDYQ…VYTARVRVKE (73 aa)). The span at 149–165 (VEASSGPQVSVTPSSKA) shows a compositional bias: polar residues. 2 disordered regions span residues 149-221 (VEAS…PKIR) and 243-309 (RRLR…KDGE). 3 stretches are compositionally biased toward basic and acidic residues: residues 198–213 (PSKK…KDVA), 243–278 (RRLR…EPAS), and 287–298 (VEREESLQKVEG). C2H2-type zinc fingers lie at residues 316-338 (FQCT…IKYH), 347-370 (YRCD…RHVH), 376-399 (FPCE…LQVH), 406-428 (HRCG…ERTH), 434-456 (YGCT…LRVH), 462-484 (FVCD…KRCH), 490-512 (FMCE…NRIH), 518-540 (FKCE…IKVH), 546-568 (YCCD…HRIH), and 574-596 (YMCN…TSIH). Residue S612 is modified to Phosphoserine.

It belongs to the krueppel C2H2-type zinc-finger protein family. Interacts with NCL.

The protein localises to the cytoplasm. It is found in the nucleus. Its subcellular location is the nucleoplasm. The protein resides in the nucleolus. Functionally, transcriptional repressor that binds the GZF1 responsive element (GRE) (consensus: 5'-TGCGCN[TG][CA]TATA-3'). May be regulating VSX2/HOX10 expression. This is GDNF-inducible zinc finger protein 1 (Gzf1) from Rattus norvegicus (Rat).